The sequence spans 253 residues: Sulfate transporter CysZ (253 aa).

Transmembrane regions (helical) follow at residues 31-51 (FVIL…WWLF), 75-95 (LLWP…FSTI), 151-171 (IVLL…PVLW), and 222-242 (IPLL…AMWV).

The protein belongs to the CysZ family.

The protein resides in the cell inner membrane. High affinity, high specificity proton-dependent sulfate transporter, which mediates sulfate uptake. Provides the sulfur source for the cysteine synthesis pathway. The chain is Sulfate transporter CysZ from Shigella dysenteriae serotype 1 (strain Sd197).